We begin with the raw amino-acid sequence, 560 residues long: Nucleoprotein (560 aa).

Residues 54–236 (LRKSKRGDTD…ITKDESALNI (183 aa)) form a binding site for the cap structure m7GTP region. The Mn(2+) site is built by aspartate 380 and glutamate 382. Residues glutamate 390, cysteine 497, histidine 500, and cysteine 521 each contribute to the Zn(2+) site. Aspartate 525 lines the Mn(2+) pocket.

The protein belongs to the arenaviridae nucleocapsid protein family. As to quaternary structure, homomultimerizes to form the nucleocapsid. Binds to viral genomic RNA. Interacts with glycoprotein G2. Interacts with protein Z; this interaction probably directs the encapsidated genome to budding sites. Interacts with protein L; this interaction does not interfere with Z-L interaction. Interacts with host IKBKE (via Protein kinase domain); the interaction inhibits IKBKE kinase activity.

Its subcellular location is the virion. The protein resides in the host cytoplasm. Its function is as follows. Encapsidates the genome, protecting it from nucleases. The encapsidated genomic RNA is termed the nucleocapsid (NC). Serves as template for viral transcription and replication. The increased presence of protein N in host cell does not seem to trigger the switch from transcription to replication as observed in other negative strain RNA viruses. Through the interaction with host IKBKE, strongly inhibits the phosphorylation and nuclear translocation of host IRF3, a protein involved in interferon activation pathway, leading to the inhibition of interferon-beta and IRF3-dependent promoters activation. Also encodes a functional 3'-5' exoribonuclease that degrades preferentially dsRNA substrates and thereby participates in the suppression of interferon induction. The polypeptide is Nucleoprotein (Homo sapiens (Human)).